The primary structure comprises 370 residues: Anthranilate phosphoribosyltransferase (370 aa).

5-phospho-alpha-D-ribose 1-diphosphate contacts are provided by residues Gly82, 85–86, Thr90, 92–95, 110–118, and Ser122; these read GD, NVST, and KHGNRAATS. Gly82 serves as a coordination point for anthranilate. Residue Ser94 participates in Mg(2+) binding. Asn113 contributes to the anthranilate binding site. Arg168 provides a ligand contact to anthranilate. Mg(2+)-binding residues include Asp226 and Glu227.

The protein belongs to the anthranilate phosphoribosyltransferase family. As to quaternary structure, homodimer. Requires Mg(2+) as cofactor.

The enzyme catalyses N-(5-phospho-beta-D-ribosyl)anthranilate + diphosphate = 5-phospho-alpha-D-ribose 1-diphosphate + anthranilate. The protein operates within amino-acid biosynthesis; L-tryptophan biosynthesis; L-tryptophan from chorismate: step 2/5. In terms of biological role, catalyzes the transfer of the phosphoribosyl group of 5-phosphorylribose-1-pyrophosphate (PRPP) to anthranilate to yield N-(5'-phosphoribosyl)-anthranilate (PRA). The chain is Anthranilate phosphoribosyltransferase from Methanosarcina acetivorans (strain ATCC 35395 / DSM 2834 / JCM 12185 / C2A).